A 209-amino-acid chain; its full sequence is Guanylate kinase (209 aa).

The Guanylate kinase-like domain occupies 9 to 188; that stretch reads GIMLVMSSPS…SVQQIKSIFI (180 aa). 16–23 provides a ligand contact to ATP; that stretch reads SPSGGGKT.

This sequence belongs to the guanylate kinase family.

It is found in the cytoplasm. The enzyme catalyses GMP + ATP = GDP + ADP. Its function is as follows. Essential for recycling GMP and indirectly, cGMP. This Ehrlichia ruminantium (strain Gardel) protein is Guanylate kinase.